A 1341-amino-acid chain; its full sequence is Pleckstrin homology domain-containing family G member 3 (1341 aa).

The interval 1-68 (MPVSTALHQD…PNSNNNSSGW (68 aa)) is disordered. Low complexity predominate over residues 18-29 (SLVSTTSSSGSS). Polar residues-rich tracts occupy residues 42 to 51 (SEASAQNGTG) and 59 to 68 (PNSNNNSSGW). Ser76 carries the post-translational modification Phosphoserine. The DH domain maps to 93-272 (YLGRVVREIV…TCVAWYINDM (180 aa)). In terms of domain architecture, PH spans 296 to 394 (DLTTYGELVL…WTHHIKRLIL (99 aa)). Phosphoserine is present on residues Ser433 and Ser502. The disordered stretch occupies residues 433-482 (SQDEVSSHVRQGRRQSEPGHTLFSRATLPSRQQGFEMPGLKGRRKSEPTR). 2 disordered regions span residues 508 to 657 (DFGQ…EFPE) and 684 to 715 (PEGS…LLPP). Composition is skewed to acidic residues over residues 529 to 541 (ELEE…EEEE) and 570 to 580 (GSEEEEEEEES). 7 positions are modified to phosphoserine: Ser571, Ser694, Ser695, Ser737, Ser759, Ser762, and Ser766. Positions 695–707 (SEEEEEEEMEAAQ) are enriched in acidic residues. Residues 775 to 832 (SIGDSLSNPPTPEVIIGADMVTDNGPSVNGTESPSAGSGCPTEQDRSSCKKKESALST) form a disordered region. Residues 798 to 810 (NGPSVNGTESPSA) are compositionally biased toward polar residues. Residues 817–832 (EQDRSSCKKKESALST) are compositionally biased toward basic and acidic residues. Phosphoserine is present on residues Ser862, Ser899, Ser900, and Ser947. Disordered stretches follow at residues 876–930 (SRFN…EFCP), 939–958 (ERME…SQAN), 1071–1097 (KVTP…SGGK), and 1117–1162 (HGTS…PFDT). The span at 939–948 (ERMESSERSP) shows a compositional bias: basic and acidic residues. Over residues 949–958 (RTGSGQSQAN) the composition is skewed to polar residues. Ser1129, Ser1134, Ser1136, Ser1141, Ser1155, Ser1158, and Ser1201 each carry phosphoserine. A compositionally biased stretch (polar residues) spans 1135–1162 (FSPSAVSPRTTSPGARSSARSPLSPFDT). Disordered regions lie at residues 1204–1249 (ENIV…LNGG) and 1271–1341 (KGPH…NSVG). The span at 1309 to 1320 (QPKEHGPRDSAD) shows a compositional bias: basic and acidic residues.

The protein resides in the cytoplasm. It localises to the cytoskeleton. Its function is as follows. Plays a role in controlling cell polarity and cell motility by selectively binding newly polymerized actin and activating RAC1 and CDC42 to enhance local actin polymerization. The polypeptide is Pleckstrin homology domain-containing family G member 3 (Mus musculus (Mouse)).